A 218-amino-acid polypeptide reads, in one-letter code: NAD(P)H-quinone oxidoreductase subunit I (218 aa).

4Fe-4S ferredoxin-type domains are found at residues 55–84 and 95–124; these read GRIH…VDWV and RNYS…MTEE. 8 residues coordinate [4Fe-4S] cluster: cysteine 64, cysteine 67, cysteine 70, cysteine 74, cysteine 104, cysteine 107, cysteine 110, and cysteine 114. The segment at 169 to 218 is disordered; sequence MDPHDVPANQPRAGQLPAEALKSLSLQQESVQGDEGESLQDASDQDQPSG. Positions 208–218 are enriched in polar residues; that stretch reads QDASDQDQPSG.

The protein belongs to the complex I 23 kDa subunit family. NDH-1 is composed of at least 11 different subunits. [4Fe-4S] cluster serves as cofactor.

Its subcellular location is the cellular thylakoid membrane. The catalysed reaction is a plastoquinone + NADH + (n+1) H(+)(in) = a plastoquinol + NAD(+) + n H(+)(out). It carries out the reaction a plastoquinone + NADPH + (n+1) H(+)(in) = a plastoquinol + NADP(+) + n H(+)(out). Its function is as follows. NDH-1 shuttles electrons from an unknown electron donor, via FMN and iron-sulfur (Fe-S) centers, to quinones in the respiratory and/or the photosynthetic chain. The immediate electron acceptor for the enzyme in this species is believed to be plastoquinone. Couples the redox reaction to proton translocation, and thus conserves the redox energy in a proton gradient. The chain is NAD(P)H-quinone oxidoreductase subunit I from Prochlorococcus marinus (strain MIT 9313).